A 91-amino-acid chain; its full sequence is MGLLRLLRGNKASAPVARERLQILLAHERGMRGQPDLLGVLREEILAVVSKHVTLDPTKVIVRLERGDEVSTLEVDIEVPNDLERKRVAVA.

Belongs to the MinE family.

In terms of biological role, prevents the cell division inhibition by proteins MinC and MinD at internal division sites while permitting inhibition at polar sites. This ensures cell division at the proper site by restricting the formation of a division septum at the midpoint of the long axis of the cell. This chain is Cell division topological specificity factor, found in Bradyrhizobium diazoefficiens (strain JCM 10833 / BCRC 13528 / IAM 13628 / NBRC 14792 / USDA 110).